The following is a 264-amino-acid chain: Apolipoprotein A-I (264 aa).

The N-terminal stretch at 1 to 18 is a signal peptide; it reads MKAVVLTVAVLFLTGSQA. Repeat copies occupy residues 67–88 and 89–110. Positions 67 to 264 are 10 X approximate tandem repeats; it reads LKLLDNWDSL…DEATKKLNTQ (198 aa). M109 is modified (methionine sulfoxide). One copy of the 3; half-length repeat lies at 111–121; it reads KDLEEVKRKVQ. A run of 3 repeats spans residues 122 to 143, 144 to 165, and 166 to 187. A 7; truncated repeat occupies 188 to 207; that stretch reads PYSDELRQRLAARLEALKEG. The stretch at 208 to 229 is repeat 8; the sequence is SSFAEYQAKATEHLSALGEKAK. The 9; half-length repeat unit spans residues 230 to 240; that stretch reads PALEDLRQGLL. The stretch at 241-264 is repeat 10; the sequence is PVLESLKLSFWSAVDEATKKLNTQ.

The protein belongs to the apolipoprotein A1/A4/E family. As to quaternary structure, homodimer. Interacts with APOA1BP and CLU. Component of a sperm activating protein complex (SPAP), consisting of APOA1, an immunoglobulin heavy chain, an immunoglobulin light chain and albumin. Interacts with NDRG1. Interacts with SCGB3A2. Interacts with NAXE and YJEFN3. In terms of processing, glycosylated. Palmitoylated. Post-translationally, phosphorylation sites are present in the extracellular medium.

It localises to the secreted. Its function is as follows. Participates in the reverse transport of cholesterol from tissues to the liver for excretion by promoting cholesterol efflux from tissues and by acting as a cofactor for the lecithin cholesterol acyltransferase (LCAT). As part of the SPAP complex, activates spermatozoa motility. The polypeptide is Apolipoprotein A-I (APOA1) (Ictidomys tridecemlineatus (Thirteen-lined ground squirrel)).